The sequence spans 409 residues: 5-aminolevulinate synthase (409 aa).

Succinyl-CoA-binding residues include R21, S137, and K156. Pyridoxal 5'-phosphate is bound by residues S189, H217, and T245. Residue K248 is part of the active site. An N6-(pyridoxal phosphate)lysine modification is found at K248. Positions 277 and 278 each coordinate pyridoxal 5'-phosphate. T365 provides a ligand contact to succinyl-CoA.

It belongs to the class-II pyridoxal-phosphate-dependent aminotransferase family. As to quaternary structure, homodimer. Requires pyridoxal 5'-phosphate as cofactor.

It carries out the reaction succinyl-CoA + glycine + H(+) = 5-aminolevulinate + CO2 + CoA. It functions in the pathway porphyrin-containing compound metabolism; protoporphyrin-IX biosynthesis; 5-aminolevulinate from glycine: step 1/1. The polypeptide is 5-aminolevulinate synthase (hemA) (Rhodobacter capsulatus (strain ATCC BAA-309 / NBRC 16581 / SB1003)).